A 152-amino-acid polypeptide reads, in one-letter code: CMT1A duplicated region transcript 4 protein (152 aa).

A compositionally biased stretch (basic and acidic residues) spans 1 to 11; it reads MDARRMKKEEG. Disordered regions lie at residues 1-23 and 60-89; these read MDAR…RKLL and ERPW…GKAV. Positions 65–74 are enriched in polar residues; it reads SRQNKPSSVI.

As to expression, expressed in fetal skeletal muscle and kidney.

In Homo sapiens (Human), this protein is CMT1A duplicated region transcript 4 protein (CDRT4).